We begin with the raw amino-acid sequence, 95 residues long: Aspartyl/glutamyl-tRNA(Asn/Gln) amidotransferase subunit C (95 aa).

Belongs to the GatC family. Heterotrimer of A, B and C subunits.

The enzyme catalyses L-glutamyl-tRNA(Gln) + L-glutamine + ATP + H2O = L-glutaminyl-tRNA(Gln) + L-glutamate + ADP + phosphate + H(+). It catalyses the reaction L-aspartyl-tRNA(Asn) + L-glutamine + ATP + H2O = L-asparaginyl-tRNA(Asn) + L-glutamate + ADP + phosphate + 2 H(+). In terms of biological role, allows the formation of correctly charged Asn-tRNA(Asn) or Gln-tRNA(Gln) through the transamidation of misacylated Asp-tRNA(Asn) or Glu-tRNA(Gln) in organisms which lack either or both of asparaginyl-tRNA or glutaminyl-tRNA synthetases. The reaction takes place in the presence of glutamine and ATP through an activated phospho-Asp-tRNA(Asn) or phospho-Glu-tRNA(Gln). This chain is Aspartyl/glutamyl-tRNA(Asn/Gln) amidotransferase subunit C, found in Nitrosococcus oceani (strain ATCC 19707 / BCRC 17464 / JCM 30415 / NCIMB 11848 / C-107).